A 273-amino-acid polypeptide reads, in one-letter code: SET domain-containing protein 9 (273 aa).

One can recognise an SET domain in the interval 96-269; it reads FSVAQATSSL…QGEELFSNYY (174 aa). Y268 serves as a coordination point for S-adenosyl-L-methionine.

Belongs to the class V-like SAM-binding methyltransferase superfamily.

The protein is SET domain-containing protein 9 (SETD9) of Pongo abelii (Sumatran orangutan).